The following is a 492-amino-acid chain: Bifunctional purine biosynthesis protein PurH (492 aa).

The 144-residue stretch at 1-144 (MKKAILSVSN…KNYKHVTTIV (144 aa)) folds into the MGS-like domain.

Belongs to the PurH family.

The catalysed reaction is (6R)-10-formyltetrahydrofolate + 5-amino-1-(5-phospho-beta-D-ribosyl)imidazole-4-carboxamide = 5-formamido-1-(5-phospho-D-ribosyl)imidazole-4-carboxamide + (6S)-5,6,7,8-tetrahydrofolate. It catalyses the reaction IMP + H2O = 5-formamido-1-(5-phospho-D-ribosyl)imidazole-4-carboxamide. The protein operates within purine metabolism; IMP biosynthesis via de novo pathway; 5-formamido-1-(5-phospho-D-ribosyl)imidazole-4-carboxamide from 5-amino-1-(5-phospho-D-ribosyl)imidazole-4-carboxamide (10-formyl THF route): step 1/1. It participates in purine metabolism; IMP biosynthesis via de novo pathway; IMP from 5-formamido-1-(5-phospho-D-ribosyl)imidazole-4-carboxamide: step 1/1. The chain is Bifunctional purine biosynthesis protein PurH from Staphylococcus aureus (strain JH1).